Here is a 1463-residue protein sequence, read N- to C-terminus: Chitin binding domain (ChtBD2) containing chtb-1 (1463 aa).

An N-terminal signal peptide occupies residues 1 to 17; that stretch reads MLRNLILITLLVASGHG. The tract at residues 70-99 is disordered; that stretch reads SSVPSVPAENTQPQQHPKARKPASPNICEQ. In terms of domain architecture, Chitin-binding type-2 spans 94 to 164; the sequence is PNICEQDNGA…IVPKRMSSLS (71 aa). A disulfide bridge connects residues C141 and C154. Disordered stretches follow at residues 720–773 and 841–869; these read IDSD…DFPI and KNPK…FPDS. Polar residues predominate over residues 722-734; that stretch reads SDTNSTTNPSQPE. 2 stretches are compositionally biased toward basic residues: residues 740–756 and 843–853; these read NNTK…KPKK and PKKRKTKRRKQ.

This Caenorhabditis elegans protein is Chitin binding domain (ChtBD2) containing chtb-1.